Consider the following 193-residue polypeptide: uncharacterized protein (193 aa).

This is an uncharacterized protein from Mycoplasma genitalium (strain ATCC 33530 / DSM 19775 / NCTC 10195 / G37) (Mycoplasmoides genitalium).